A 300-amino-acid chain; its full sequence is MNLPKKVRLVEVGPRDGLQNEKQPIEVADKIRLVDDLSAAGLDYIEVGSFVSPKWVPQMAGSAEVFAGIRQRPGVTYAALAPNLKGFEAALESGVKEVAVFAAASEAFSQRNINCSIKDSLERFVPVLEAARQHQVRVRGYISCVLGCPYDGDVDPRQVAWVARELQQMGCYEVSLGDTIGVGTAGATRRLIEAVASEVPRERLAGHFHDTYGQALANIYASLLEGIAVFDSSVAGLGGCPYAKGATGNVASEDVLYLLNGLEIHTGVDMHALVDAGQRICAVLGKSNGSRAAKALLAKA.

Positions 7–274 (VRLVEVGPRD…HTGVDMHALV (268 aa)) constitute a Pyruvate carboxyltransferase domain. Substrate is bound at residue Arg-15. Residues Asp-16, His-207, and His-209 each coordinate a divalent metal cation. The active site involves Cys-240. Asn-249 serves as a coordination point for a divalent metal cation.

The protein belongs to the HMG-CoA lyase family. As to quaternary structure, homodimer. Mg(2+) is required as a cofactor. The cofactor is Mn(2+).

It carries out the reaction 3-hydroxy-3-(4-methylpent-3-en-1-yl)glutaryl-CoA = 7-methyl-3-oxooct-6-enoyl-CoA + acetate. It catalyses the reaction (3S)-3-hydroxy-3-methylglutaryl-CoA = acetoacetate + acetyl-CoA. It functions in the pathway metabolic intermediate metabolism; (S)-3-hydroxy-3-methylglutaryl-CoA degradation; acetoacetate from (S)-3-hydroxy-3-methylglutaryl-CoA: step 1/1. In terms of biological role, involved in the L-leucine, isovalerate and acyclic monoterpene catabolism. Catalyzes the cleavage of 3-hydroxy-3-methylglutaryl-CoA (HMG-CoA) to yield acetyl-CoA and acetoacetate. It can also catalyze the cleavage of 3-hydroxy-3-isohexenylglutaryl-CoA (HIHG_CoA) to yield 7-methyl-3-oxooct-6-enoyl-CoA and acetate. The protein is 3-hydroxy-3-isohexenylglutaryl-CoA/hydroxy-methylglutaryl-CoA lyase of Pseudomonas aeruginosa (strain ATCC 15692 / DSM 22644 / CIP 104116 / JCM 14847 / LMG 12228 / 1C / PRS 101 / PAO1).